The chain runs to 369 residues: RNA-binding protein rnp24 (369 aa).

3 disordered regions span residues 1 to 77 (MEPI…KKKE), 200 to 219 (TDFS…TASI), and 304 to 369 (RMRN…IKFD). Residues 105–206 (WGIWVGNLSF…KSNTDFSGRP (102 aa)) form the RRM 1 domain. The segment covering 209–219 (PANTLSKTASI) has biased composition (polar residues). In terms of domain architecture, RRM 2 spans 228–310 (SILFVGNLDF…RSKRMRNKSP (83 aa)). A compositionally biased stretch (basic and acidic residues) spans 325-341 (QEDKPNFKRARKIDPRS). Positions 346–357 (AALAKAQRSSAA) are enriched in low complexity.

Its subcellular location is the nucleus. The sequence is that of RNA-binding protein rnp24 (rnp24) from Schizosaccharomyces pombe (strain 972 / ATCC 24843) (Fission yeast).